The sequence spans 339 residues: Small ribosomal subunit biogenesis GTPase RsgA (339 aa).

A CP-type G domain is found at 111–271 (MRGLLKPVAA…LIDSPGIREF (161 aa)). GTP contacts are provided by residues 159 to 162 (NKAD) and 213 to 221 (GQSGVGKSS). The Zn(2+) site is built by cysteine 295, cysteine 300, histidine 302, and cysteine 308.

Belongs to the TRAFAC class YlqF/YawG GTPase family. RsgA subfamily. Monomer. Associates with 30S ribosomal subunit, binds 16S rRNA. It depends on Zn(2+) as a cofactor.

It localises to the cytoplasm. One of several proteins that assist in the late maturation steps of the functional core of the 30S ribosomal subunit. Helps release RbfA from mature subunits. May play a role in the assembly of ribosomal proteins into the subunit. Circularly permuted GTPase that catalyzes slow GTP hydrolysis, GTPase activity is stimulated by the 30S ribosomal subunit. The sequence is that of Small ribosomal subunit biogenesis GTPase RsgA from Pseudomonas aeruginosa (strain LESB58).